We begin with the raw amino-acid sequence, 498 residues long: Glycerol kinase (498 aa).

Threonine 12 provides a ligand contact to ADP. 3 residues coordinate ATP: threonine 12, threonine 13, and serine 14. Threonine 12 serves as a coordination point for sn-glycerol 3-phosphate. An ADP-binding site is contributed by arginine 16. Residues arginine 82, tyrosine 134, and aspartate 243 each contribute to the sn-glycerol 3-phosphate site. Glycerol-binding residues include arginine 82, tyrosine 134, aspartate 243, and glutamine 244. 2 residues coordinate ADP: threonine 265 and glycine 308. ATP is bound by residues threonine 265, glycine 308, glutamine 312, and glycine 411. Residue glycine 411 participates in ADP binding.

It belongs to the FGGY kinase family.

The catalysed reaction is glycerol + ATP = sn-glycerol 3-phosphate + ADP + H(+). The protein operates within polyol metabolism; glycerol degradation via glycerol kinase pathway; sn-glycerol 3-phosphate from glycerol: step 1/1. Its activity is regulated as follows. Inhibited by fructose 1,6-bisphosphate (FBP). Functionally, key enzyme in the regulation of glycerol uptake and metabolism. Catalyzes the phosphorylation of glycerol to yield sn-glycerol 3-phosphate. The polypeptide is Glycerol kinase (Brucella suis (strain ATCC 23445 / NCTC 10510)).